We begin with the raw amino-acid sequence, 352 residues long: Probable transcription factor At1g11510 (352 aa).

2 disordered regions span residues 1–132 (MSRR…GGEE) and 239–269 (MKSN…KNNC). Acidic residues predominate over residues 56–66 (SGSDEETDSDS). Basic and acidic residues-rich tracts occupy residues 89 to 101 (KTSE…RSLE), 117 to 132 (VSGE…GGEE), and 241 to 259 (SNEK…HELD).

It belongs to the GeBP family.

This chain is Probable transcription factor At1g11510, found in Arabidopsis thaliana (Mouse-ear cress).